A 160-amino-acid polypeptide reads, in one-letter code: Phosphopantetheine adenylyltransferase (160 aa).

S9 contributes to the substrate binding site. ATP-binding positions include 9–10 (SF) and H17. 3 residues coordinate substrate: K41, V73, and K87. Residues 88–90 (GLR), E98, and 122–128 (YSFVSSS) contribute to the ATP site.

It belongs to the bacterial CoaD family. As to quaternary structure, homohexamer. The cofactor is Mg(2+).

Its subcellular location is the cytoplasm. The catalysed reaction is (R)-4'-phosphopantetheine + ATP + H(+) = 3'-dephospho-CoA + diphosphate. The protein operates within cofactor biosynthesis; coenzyme A biosynthesis; CoA from (R)-pantothenate: step 4/5. Functionally, reversibly transfers an adenylyl group from ATP to 4'-phosphopantetheine, yielding dephospho-CoA (dPCoA) and pyrophosphate. The sequence is that of Phosphopantetheine adenylyltransferase from Mycobacterium avium (strain 104).